Here is a 154-residue protein sequence, read N- to C-terminus: UPF0756 membrane protein BPUM_2558 (154 aa).

A run of 4 helical transmembrane segments spans residues 8–28 (FLVL…ILAV), 54–74 (WGVT…DIGF), 87–107 (WIAL…IVLL), and 117–137 (LVFG…GPLI).

This sequence belongs to the UPF0756 family.

The protein resides in the cell membrane. This is UPF0756 membrane protein BPUM_2558 from Bacillus pumilus (strain SAFR-032).